A 943-amino-acid chain; its full sequence is Serine/threonine-protein kinase ATG1 (943 aa).

A Protein kinase domain is found at 22–327 (FVIDKEIGKG…FEDFFHHPVI (306 aa)). ATP is bound by residues 28–36 (IGKGSFAQV) and lysine 51. Aspartate 165 (proton acceptor) is an active-site residue. Disordered stretches follow at residues 334–468 (LVED…LTDE), 503–561 (QQGQ…SPGA), 774–800 (LPEEHPSHPSNRPPETSALGGSSGGQA), 858–888 (HLPKRRVSTSSKEEQSVAAQDASDDMSSDDK), and 914–943 (AASKAQQQQQQQQVVVRRRSGDVTPRSVPT). A compositionally biased stretch (basic and acidic residues) spans 338–352 (DIPKPEKPVLAETKS). Positions 517-529 (ATQQGHPTSTTGA) are enriched in polar residues. Residues 542 to 554 (RNDHYRKASHDKT) show a composition bias toward basic and acidic residues. Residues 919–928 (QQQQQQQQVV) are compositionally biased toward low complexity.

The protein belongs to the protein kinase superfamily. Ser/Thr protein kinase family. APG1/unc-51/ULK1 subfamily. Homodimer. Forms a ternary complex with ATG13 and ATG17.

Its subcellular location is the cytoplasm. The protein localises to the preautophagosomal structure membrane. The enzyme catalyses L-seryl-[protein] + ATP = O-phospho-L-seryl-[protein] + ADP + H(+). It catalyses the reaction L-threonyl-[protein] + ATP = O-phospho-L-threonyl-[protein] + ADP + H(+). Functionally, serine/threonine protein kinase involved in the cytoplasm to vacuole transport (Cvt) and found to be essential in autophagy, where it is required for the formation of autophagosomes. Involved in the clearance of protein aggregates which cannot be efficiently cleared by the proteasome. Required for selective autophagic degradation of the nucleus (nucleophagy) as well as for mitophagy which contributes to regulate mitochondrial quantity and quality by eliminating the mitochondria to a basal level to fulfill cellular energy requirements and preventing excess ROS production. Also involved in endoplasmic reticulum-specific autophagic process, in selective removal of ER-associated degradation (ERAD) substrates. Plays a key role in ATG9 and ATG23 cycling through the pre-autophagosomal structure and is necessary to promote ATG18 binding to ATG9 through phosphorylation of ATG9. Catalyzes phosphorylation of ATG4, decreasing the interaction between ATG4 and ATG8 and impairing deconjugation of PE-conjugated forms of ATG8. The protein is Serine/threonine-protein kinase ATG1 of Chaetomium globosum (strain ATCC 6205 / CBS 148.51 / DSM 1962 / NBRC 6347 / NRRL 1970) (Soil fungus).